The following is a 704-amino-acid chain: Elongation factor G (704 aa).

In terms of domain architecture, tr-type G spans 10-286 (KKVRNIGIMA…AVIDFLPNPM (277 aa)). Residues 19–26 (AHIDAGKT), 83–87 (DTPGH), and 137–140 (NKMD) each bind GTP.

It belongs to the TRAFAC class translation factor GTPase superfamily. Classic translation factor GTPase family. EF-G/EF-2 subfamily.

It is found in the cytoplasm. Catalyzes the GTP-dependent ribosomal translocation step during translation elongation. During this step, the ribosome changes from the pre-translocational (PRE) to the post-translocational (POST) state as the newly formed A-site-bound peptidyl-tRNA and P-site-bound deacylated tRNA move to the P and E sites, respectively. Catalyzes the coordinated movement of the two tRNA molecules, the mRNA and conformational changes in the ribosome. This Corynebacterium jeikeium (strain K411) protein is Elongation factor G.